The sequence spans 285 residues: uncharacterized protein (285 aa).

A helical transmembrane segment spans residues 197-217 (PTIGALLSLVSAFFSFIPFLM).

Its subcellular location is the membrane. This is an uncharacterized protein from Saccharomyces cerevisiae (strain ATCC 204508 / S288c) (Baker's yeast).